A 214-amino-acid chain; its full sequence is Large ribosomal subunit protein uL3 (214 aa).

The residue at position 151 (glutamine 151) is an N5-methylglutamine.

It belongs to the universal ribosomal protein uL3 family. In terms of assembly, part of the 50S ribosomal subunit. Forms a cluster with proteins L14 and L19. Post-translationally, methylated by PrmB.

Its function is as follows. One of the primary rRNA binding proteins, it binds directly near the 3'-end of the 23S rRNA, where it nucleates assembly of the 50S subunit. This Magnetococcus marinus (strain ATCC BAA-1437 / JCM 17883 / MC-1) protein is Large ribosomal subunit protein uL3.